A 179-amino-acid chain; its full sequence is Large ribosomal subunit protein uL5 (179 aa).

It belongs to the universal ribosomal protein uL5 family. Part of the 50S ribosomal subunit; part of the 5S rRNA/L5/L18/L25 subcomplex. Contacts the 5S rRNA and the P site tRNA. Forms a bridge to the 30S subunit in the 70S ribosome.

In terms of biological role, this is one of the proteins that bind and probably mediate the attachment of the 5S RNA into the large ribosomal subunit, where it forms part of the central protuberance. In the 70S ribosome it contacts protein S13 of the 30S subunit (bridge B1b), connecting the 2 subunits; this bridge is implicated in subunit movement. Contacts the P site tRNA; the 5S rRNA and some of its associated proteins might help stabilize positioning of ribosome-bound tRNAs. The protein is Large ribosomal subunit protein uL5 of Enterococcus faecalis (strain ATCC 700802 / V583).